The sequence spans 385 residues: Protein-glutamate methylesterase/protein-glutamine glutaminase (385 aa).

The residue at position 53 (aspartate 53) is a 4-aspartylphosphate. Residues 196-385 (KHKTGKIIVV…EIADHVLRRS (190 aa)) enclose the CheB-type methylesterase domain. Catalysis depends on residues serine 208, histidine 234, and aspartate 330.

The protein belongs to the CheB family. Post-translationally, phosphorylated by CheA. Phosphorylation of the N-terminal regulatory domain activates the methylesterase activity.

It is found in the cytoplasm. It catalyses the reaction [protein]-L-glutamate 5-O-methyl ester + H2O = L-glutamyl-[protein] + methanol + H(+). The enzyme catalyses L-glutaminyl-[protein] + H2O = L-glutamyl-[protein] + NH4(+). Functionally, involved in chemotaxis. Part of a chemotaxis signal transduction system that modulates chemotaxis in response to various stimuli. Catalyzes the demethylation of specific methylglutamate residues introduced into the chemoreceptors (methyl-accepting chemotaxis proteins or MCP) by CheR. Also mediates the irreversible deamidation of specific glutamine residues to glutamic acid. The sequence is that of Protein-glutamate methylesterase/protein-glutamine glutaminase from Borreliella burgdorferi (strain ATCC 35210 / DSM 4680 / CIP 102532 / B31) (Borrelia burgdorferi).